The sequence spans 1564 residues: Abnormal spindle-like microcephaly-associated protein homolog (1564 aa).

IQ domains are found at residues 31–60 (YLWA…MLKS), 220–251 (LKKN…VIIQ), 270–299 (TRSA…SVIK), 293–322 (ILTS…ATIK), 366–395 (MRES…AVIS), 389–420 (QRKA…IIIQ), 439–468 (VKKA…AAVK), 462–491 (QSVA…SIIK), 512–541 (AKAA…AAMK), 535–566 (EHQA…LVIQ), 608–639 (QHTC…LLIQ), 658–687 (TKAA…AAIT), 681–712 (CNTA…IIIQ), 731–762 (LKKT…TFIK), 754–785 (MHRA…IVIQ), 804–835 (ILKA…TLIQ), 827–856 (LRIA…ITRT), 877–908 (LRHS…TLIQ), 900–931 (MHIA…IWIQ), 949–980 (LQNA…AFIQ), 972–1003 (MHRA…VVIQ), 1022–1053 (QRYS…ILIQ), 1045–1076 (MYFS…IFIQ), 1095–1126 (LRKA…VLIQ), 1168–1199 (QWHS…IIIQ), 1304–1333 (HTQA…AATR), 1327–1358 (MHLA…VIIQ), 1377–1406 (VQKS…EKMA), 1452–1483 (QSRA…RIQS), 1474–1503 (QKCA…QKRA), and 1500–1531 (QKRA…VVLQ).

The protein resides in the cytoplasm. It localises to the nucleus. Its function is as follows. Probable role in mitotic spindle regulation and coordination of mitotic processes. May have a preferential role in regulating neurogenesis. This chain is Abnormal spindle-like microcephaly-associated protein homolog (ASPM), found in Ateles geoffroyi (Black-handed spider monkey).